Consider the following 118-residue polypeptide: Beta-2-microglobulin (118 aa).

Residues 1-20 form the signal peptide; the sequence is MAVSAALVLLGLLSLSGLDA. Residues 25-112 enclose the Ig-like C1-type domain; that stretch reads PEVQVYSRHP…HVTLTQPKIV (88 aa). The cysteines at positions 45 and 99 are disulfide-linked.

The protein belongs to the beta-2-microglobulin family. As to quaternary structure, heterodimer of an alpha chain and a beta chain. Beta-2-microglobulin is the beta-chain of major histocompatibility complex class I molecules.

The protein localises to the secreted. Functionally, component of the class I major histocompatibility complex (MHC). Involved in the presentation of peptide antigens to the immune system. The chain is Beta-2-microglobulin (B2M) from Ovis aries (Sheep).